We begin with the raw amino-acid sequence, 90 residues long: Large ribosomal subunit protein bL27 (90 aa).

The interval 1 to 24 is disordered; sequence MAHKKGTGSTRNGRDSNSKRLGVK.

The protein belongs to the bacterial ribosomal protein bL27 family.

The protein is Large ribosomal subunit protein bL27 of Prochlorococcus marinus (strain NATL1A).